Consider the following 399-residue polypeptide: Cell division protein FtsZ (399 aa).

GTP is bound by residues 30 to 34 (GGGSN), 117 to 119 (GTG), glutamate 148, lysine 152, and aspartate 196. The tract at residues 349–368 (TLMSGNQNAPSGSYEQQDSS) is disordered. The span at 351 to 368 (MSGNQNAPSGSYEQQDSS) shows a compositional bias: polar residues.

It belongs to the FtsZ family. Homodimer. Polymerizes to form a dynamic ring structure in a strictly GTP-dependent manner. Interacts directly with several other division proteins.

It is found in the cytoplasm. Functionally, essential cell division protein that forms a contractile ring structure (Z ring) at the future cell division site. The regulation of the ring assembly controls the timing and the location of cell division. One of the functions of the FtsZ ring is to recruit other cell division proteins to the septum to produce a new cell wall between the dividing cells. Binds GTP and shows GTPase activity. This is Cell division protein FtsZ from Borreliella burgdorferi (strain ATCC 35210 / DSM 4680 / CIP 102532 / B31) (Borrelia burgdorferi).